Reading from the N-terminus, the 144-residue chain is Macromomycin (144 aa).

Residues 1–32 (MLQNTSRFLARAGATVGVAAGLAFSLPADRDG) form the signal peptide. Cystine bridges form between Cys-68–Cys-78 and Cys-120–Cys-125.

Belongs to the neocarzinostatin family.

Its function is as follows. Binds non-covalently to a chromophore which is the cytotoxic and mutagenic component of the antibiotic. The chromophore binds to DNA as a weak intercalator and causes single- and double-strand breaks. This chain is Macromomycin, found in Streptomyces macromomyceticus.